The sequence spans 510 residues: GMP synthase [glutamine-hydrolyzing] (510 aa).

Residues 5–195 (LVFIIDFGGQ…LFNICELKGD (191 aa)) form the Glutamine amidotransferase type-1 domain. C82 serves as the catalytic Nucleophile. Residues H169 and E171 contribute to the active site. The 190-residue stretch at 196-385 (WSVTSFAEEK…LGIPHKLVWR (190 aa)) folds into the GMPS ATP-PPase domain. 223–229 (SGGVDSS) lines the ATP pocket.

As to quaternary structure, homodimer.

It carries out the reaction XMP + L-glutamine + ATP + H2O = GMP + L-glutamate + AMP + diphosphate + 2 H(+). It functions in the pathway purine metabolism; GMP biosynthesis; GMP from XMP (L-Gln route): step 1/1. Functionally, catalyzes the synthesis of GMP from XMP. This is GMP synthase [glutamine-hydrolyzing] from Clostridium tetani (strain Massachusetts / E88).